The following is a 97-amino-acid chain: Sperm-associated acrosin inhibitor (97 aa).

The signal sequence occupies residues 1-26 (MAFFSSRVRALFILVLVLPLCSETGF). In terms of domain architecture, Kazal-like spans 32-90 (TRKEPDCDVYRSHLFFCTREMDPICGTNGKSYANPCIFCSEKLGRNEKFDFGHWGHCRE). Intrachain disulfides connect Cys38–Cys70, Cys48–Cys67, and Cys56–Cys88.

Seminal plasma.

The protein localises to the secreted. Functionally, inhibits acrosin. In Sus scrofa (Pig), this protein is Sperm-associated acrosin inhibitor.